Here is a 431-residue protein sequence, read N- to C-terminus: Enolase (431 aa).

Residue Gln-167 coordinates (2R)-2-phosphoglycerate. The Proton donor role is filled by Glu-209. Residues Asp-246, Glu-289, and Asp-316 each coordinate Mg(2+). Residues Lys-341, Arg-370, Ser-371, and Lys-392 each coordinate (2R)-2-phosphoglycerate. The Proton acceptor role is filled by Lys-341.

The protein belongs to the enolase family. In terms of assembly, component of the RNA degradosome, a multiprotein complex involved in RNA processing and mRNA degradation. Mg(2+) serves as cofactor.

The protein resides in the cytoplasm. The protein localises to the secreted. Its subcellular location is the cell surface. The catalysed reaction is (2R)-2-phosphoglycerate = phosphoenolpyruvate + H2O. Its pathway is carbohydrate degradation; glycolysis; pyruvate from D-glyceraldehyde 3-phosphate: step 4/5. Catalyzes the reversible conversion of 2-phosphoglycerate (2-PG) into phosphoenolpyruvate (PEP). It is essential for the degradation of carbohydrates via glycolysis. The protein is Enolase of Shewanella oneidensis (strain ATCC 700550 / JCM 31522 / CIP 106686 / LMG 19005 / NCIMB 14063 / MR-1).